The sequence spans 241 residues: MDNETSTPDIFQWCVSPFSKITLKRSMEQRDIVEFRIDATILRQIFHHGFPDLSFNLMVITTDRKVFLLERTESFHYPRVVERIKRGQECTKLVETLYQAERDAVRRLTAEADIVPLAAVKQDDDRPESIYIFPGGHCNGNEPVLSTLLREFREETTIPLKTTELRFHATKVYGIWIHDFAVGKTFKNFVFPVKINLSSAAIRDRFRETRHTRNPTFVDIGKSHRQSLLDLVIKVQKIMIL.

One can recognise a Nudix hydrolase domain in the interval phenylalanine 50 to leucine 241. The Nudix box signature appears at glycine 136–threonine 157. Residues glutamate 151, glutamate 155, and aspartate 204 each coordinate Mg(2+).

This sequence belongs to the Nudix hydrolase family.

The sequence is that of Putative hydrolase 080R from Aedes vexans (Inland floodwater mosquito).